The following is a 1032-amino-acid chain: uncharacterized protein (1032 aa).

Residues 1–17 (MYEEIRMKFTDIFIRRP) are Cytoplasmic-facing. Residues 18-36 (VLAVSISLLMIILGLQAIS) form a helical membrane-spanning segment. The Periplasmic segment spans residues 37-337 (KLAVREYPKM…TIAINSSIHE (301 aa)). The helical transmembrane segment at 338-357 (VIKTIGEATLIVLVVILMFI) threads the bilayer. Over 358-363 (GSFRAI) the chain is Cytoplasmic. The chain crosses the membrane as a helical span at residues 364 to 383 (LIPILAIPISLIGVLMLLQS). Residues 384-389 (FNFSIN) lie on the Periplasmic side of the membrane. A helical membrane pass occupies residues 390-411 (LMTLLALILAIGLVVDDAIVVL). The Cytoplasmic portion of the chain corresponds to 412–438 (ENIDRHIKAGETPFRAAIIGTREIAVP). A helical transmembrane segment spans residues 439-457 (VISMTIALIAVYSPMALMG). Topologically, residues 458 to 470 (GITGTLFKEFALT) are periplasmic. A helical transmembrane segment spans residues 471-493 (LAGAVFISGVVALTLSPMMSSKL). The Cytoplasmic portion of the chain corresponds to 494–529 (LKSNAKPTWMEERVEHTLGKVNRVYEYMLDLVMLNR). Residues 530-548 (KSMLAFAVVIFSTLPFLFN) form a helical membrane-spanning segment. Topologically, residues 549-852 (SLSSELTPNE…ARQLVQEGNA (304 aa)) are periplasmic. The chain crosses the membrane as a helical span at residues 853 to 872 (LAVTFALAVIIIFLVLAIQF). The Cytoplasmic portion of the chain corresponds to 873–878 (ESIRDP). A helical membrane pass occupies residues 879–898 (MVIMISVPLAVSGALVSLNI). Topologically, residues 899-910 (LSFFSIAGTTLN) are periplasmic. A helical membrane pass occupies residues 911 to 932 (IYSQVGLITLVGLITKHGILMC). At 933–960 (EVAKEEQLNHGKTRIEAITHAAKVRLRP) the chain is on the cytoplasmic side. Residues 961–979 (ILMTTAAMVAGLIPLLYAT) traverse the membrane as a helical segment. Over 980–992 (GAGAVSRFSIGIV) the chain is Periplasmic. The helical transmembrane segment at 993–1015 (IVAGLSIGTIFTLFVLPVVYSYV) threads the bilayer. The Cytoplasmic segment spans residues 1016–1032 (ATEHKPLPVFDENKTTH).

It belongs to the resistance-nodulation-cell division (RND) (TC 2.A.6) family.

The protein localises to the cell inner membrane. In terms of biological role, could be a drug efflux pump. This is an uncharacterized protein from Haemophilus influenzae (strain ATCC 51907 / DSM 11121 / KW20 / Rd).